We begin with the raw amino-acid sequence, 333 residues long: MASQNTEQEYEAKLAPSVGGEPTSGGPSGSSPDPNPDSSEVLDRHEDQAMSQDPGSQDNSPPEDRNQRVVNVEDNHNLFRLSFPRKLWTIVEEDTFKSVSWNDDGDAVIIDKDLFQREVLQRKGAERIFKTDSLTSFIRQLNLYGFCKTRPSNSPGNKKMMIYCNSNFQRDKPRLLENIQRKDALRNTAQQATRVPTPKRKNLVATRRSLRIYHINARKEAIKMCQQGAPSVQGPSGTQSFRRSGMWSKKSATRHPLGNGPPQEPNGPSWEGTSGNVTFTSSATTWMEGTGILSSLVYSDNGSVMSLYNICYYALLASLSVMSPNEPSDDEEE.

A disordered region spans residues 1–66 (MASQNTEQEY…QDNSPPEDRN (66 aa)). The span at 29 to 39 (GSSPDPNPDSS) shows a compositional bias: low complexity. The segment covering 49–60 (AMSQDPGSQDNS) has biased composition (polar residues). Residues 79-182 (FRLSFPRKLW…PRLLENIQRK (104 aa)) mediate DNA binding. Positions 227 to 275 (QGAPSVQGPSGTQSFRRSGMWSKKSATRHPLGNGPPQEPNGPSWEGTSG) are disordered. Residues 228 to 242 (GAPSVQGPSGTQSFR) show a composition bias toward polar residues.

This sequence belongs to the HSF family.

Its subcellular location is the nucleus. The polypeptide is Heat shock transcription factor, X-linked member 3 (Homo sapiens (Human)).